Consider the following 585-residue polypeptide: Arginine--tRNA ligase (585 aa).

The 'HIGH' region motif lies at 127-137; the sequence is PNTNKPLHVGH.

This sequence belongs to the class-I aminoacyl-tRNA synthetase family. In terms of assembly, monomer.

Its subcellular location is the cytoplasm. It catalyses the reaction tRNA(Arg) + L-arginine + ATP = L-arginyl-tRNA(Arg) + AMP + diphosphate. This Borrelia duttonii (strain Ly) protein is Arginine--tRNA ligase.